Consider the following 663-residue polypeptide: Alpha-amylase MalA (663 aa).

Disordered regions lie at residues 1 to 28 (MHHP…PTAT) and 80 to 135 (GTLE…LTLR). Residues 92–111 (RSGGHSGGVSGGRSGPGRSG) show a composition bias toward gly residues. Asp411 (nucleophile) is an active-site residue. Residue Glu440 is the Proton donor of the active site.

Belongs to the glycosyl hydrolase 13 family.

Its subcellular location is the cytoplasm. It carries out the reaction Endohydrolysis of (1-&gt;4)-alpha-D-glucosidic linkages in polysaccharides containing three or more (1-&gt;4)-alpha-linked D-glucose units.. The protein operates within glycan degradation; starch degradation. Stable and active over a broad range of NaCl concentrations (0.5 to 4.2 M NaCl), with maximal activity at 2.6 M NaCl. 83% and 94% of the maximum activity at 0.6 and 4.2 M NaCl, respectively. Active and stable also in KCl. Functionally, alpha-amylase that cleaves starch into oligosaccharides, the first step in starch degradation. Endo-acting enzyme which prefers a linear polysaccharide to branched polysaccharides hydrolyzing alpha-1,4 glucosidic bonds efficiently. Also has transglycosylation activity, but does not act on alpha-1,6 bonds. Higher activities of 100%, 79% and 67.8% against amylose, soluble starch and amylopectin, respectively. Lower activity of 22% against glycogen and faint or no activity against alpha-, beta- and gamma-cyclodextrin. This is Alpha-amylase MalA from Haloarcula japonica (strain ATCC 49778 / DSM 6131 / JCM 7785 / NBRC 101032 / NCIMB 13157 / TR-1).